We begin with the raw amino-acid sequence, 276 residues long: Ribosomal RNA small subunit methyltransferase A (276 aa).

S-adenosyl-L-methionine contacts are provided by asparagine 27, leucine 29, glycine 54, glutamate 75, aspartate 101, and asparagine 123.

It belongs to the class I-like SAM-binding methyltransferase superfamily. rRNA adenine N(6)-methyltransferase family. RsmA subfamily.

The protein localises to the cytoplasm. It catalyses the reaction adenosine(1518)/adenosine(1519) in 16S rRNA + 4 S-adenosyl-L-methionine = N(6)-dimethyladenosine(1518)/N(6)-dimethyladenosine(1519) in 16S rRNA + 4 S-adenosyl-L-homocysteine + 4 H(+). Specifically dimethylates two adjacent adenosines (A1518 and A1519) in the loop of a conserved hairpin near the 3'-end of 16S rRNA in the 30S particle. May play a critical role in biogenesis of 30S subunits. The protein is Ribosomal RNA small subunit methyltransferase A of Bartonella tribocorum (strain CIP 105476 / IBS 506).